Consider the following 313-residue polypeptide: Olfactory receptor 1J4 (313 aa).

The Extracellular portion of the chain corresponds to 1-25 (MKRENQSSVSEFLLLDLPIWPEQQA). A glycan (N-linked (GlcNAc...) asparagine) is linked at Asn5. The helical transmembrane segment at 26–49 (VFFTLFLGMYLITVLGNLLIILLI) threads the bilayer. The Cytoplasmic portion of the chain corresponds to 50–57 (RLDSHLHT). A helical membrane pass occupies residues 58 to 79 (PMFFFLSHLALTDISLSSVTVP). At 80 to 100 (KMLLSMQTQDQSILYAGCVTQ) the chain is on the extracellular side. The cysteines at positions 97 and 189 are disulfide-linked. A helical transmembrane segment spans residues 101–120 (MYFFIFFTDLDNFLLTSMAY). The Cytoplasmic segment spans residues 121–139 (DRYVAICHPLRYTTIMKEG). A helical transmembrane segment spans residues 140–158 (LCNLLVTVSWILSCTNALS). The Extracellular portion of the chain corresponds to 159 to 195 (HTLLLAQLSFCADNTIPHFFCDLVALLKLSCSDISLN). The helical transmembrane segment at 196–219 (ELVIFTVGQAVITLPLICILISYG) threads the bilayer. Residues 220–236 (HIGVTILKAPSTKGIFK) lie on the Cytoplasmic side of the membrane. A helical transmembrane segment spans residues 237-259 (ALSTCGSHLSVVSLYYGTIIGLY). Residues 260 to 272 (FLPSSSASSDKDV) are Extracellular-facing. Residues 273 to 292 (IASVMYTVITPLLNPFIYSL) traverse the membrane as a helical segment. The Cytoplasmic segment spans residues 293-313 (RNRDIKGALERLFNRATVLSQ).

Belongs to the G-protein coupled receptor 1 family.

Its subcellular location is the cell membrane. Functionally, odorant receptor. This is Olfactory receptor 1J4 (OR1J4) from Homo sapiens (Human).